A 120-amino-acid polypeptide reads, in one-letter code: MLKMDREKLIVPNQIGYLILKEDGAVLESGGDLKNDERSANVIMGLLNLTETIDESFMPSSSCERITIDYEHHYYSICMSNRRIYIIKISKSQNGVTTTTSSSSSNSVYNDASDSGAVLA.

Residues glutamine 93–alanine 120 form a disordered region. Residues threonine 97–serine 107 show a composition bias toward low complexity.

This sequence belongs to the LAMTOR4 family. Part of the Ragulator complex composed of Lamtor3, Lamtor2, CG14184, CG14812, and Lamtor4.

Its subcellular location is the lysosome. Its function is as follows. Regulator of the TOR pathway, a signaling cascade that promotes cell growth in response to growth factors, energy levels, and amino acids. As part of the Ragulator complex, may activate the TOR signaling cascade in response to amino acids. The polypeptide is Ragulator complex protein LAMTOR4 homolog (Drosophila melanogaster (Fruit fly)).